A 348-amino-acid polypeptide reads, in one-letter code: Galactose-1-phosphate uridylyltransferase (348 aa).

28 to 31 (RAKR) contacts UDP-alpha-D-glucose. Zn(2+) contacts are provided by cysteine 52 and cysteine 55. Residues valine 61 and 77 to 78 (ND) each bind UDP-alpha-D-glucose. Residue histidine 115 coordinates Zn(2+). UDP-alpha-D-glucose-binding positions include asparagine 153 and 159–161 (GCS). Histidine 164 lines the Zn(2+) pocket. Histidine 166 functions as the Tele-UMP-histidine intermediate in the catalytic mechanism. Glutamine 168 contributes to the UDP-alpha-D-glucose binding site. Fe cation is bound by residues glutamate 182, histidine 281, histidine 296, and histidine 298. UDP-alpha-D-glucose-binding positions include 311-312 (KF), 316-317 (YE), and glutamine 323.

Belongs to the galactose-1-phosphate uridylyltransferase type 1 family. In terms of assembly, homodimer. The cofactor is Zn(2+).

It carries out the reaction alpha-D-galactose 1-phosphate + UDP-alpha-D-glucose = alpha-D-glucose 1-phosphate + UDP-alpha-D-galactose. It participates in carbohydrate metabolism; galactose metabolism. In Escherichia coli (strain K12), this protein is Galactose-1-phosphate uridylyltransferase (galT).